The sequence spans 240 residues: Thiopurine S-methyltransferase (240 aa).

An S-adenosyl-L-methionine-binding site is contributed by 24-35 (WKEKWVTRHISF). Position 34 is a phosphoserine (Ser34). Phe35 contacts substrate. An N6-acetyllysine modification is found at Lys53. S-adenosyl-L-methionine-binding positions include Leu64, Glu85, 129–130 (SI), and Arg147.

The protein belongs to the class I-like SAM-binding methyltransferase superfamily. TPMT family. As to quaternary structure, monomer.

The protein localises to the cytoplasm. The catalysed reaction is S-adenosyl-L-methionine + a thiopurine = S-adenosyl-L-homocysteine + a thiopurine S-methylether.. The enzyme catalyses mercaptopurine + S-adenosyl-L-methionine = 6-methylthiopurine + S-adenosyl-L-homocysteine + H(+). Catalyzes the S-methylation of thiopurine drugs such as 6-mercaptopurine (also called mercaptopurine, 6-MP or its brand name Purinethol) using S-adenosyl-L-methionine as the methyl donor. TPMT activity modulates the cytotoxic effects of thiopurine prodrugs. A natural substrate for this enzyme has yet to be identified. This is Thiopurine S-methyltransferase (Tpmt) from Mus musculus (Mouse).